The sequence spans 1420 residues: DNA-directed RNA polymerase subunit beta' (1420 aa).

Cys72, Cys74, Cys87, and Cys90 together coordinate Zn(2+). The Mg(2+) site is built by Asp462, Asp464, and Asp466. Cys816, Cys896, Cys903, and Cys906 together coordinate Zn(2+).

This sequence belongs to the RNA polymerase beta' chain family. The RNAP catalytic core consists of 2 alpha, 1 beta, 1 beta' and 1 omega subunit. When a sigma factor is associated with the core the holoenzyme is formed, which can initiate transcription. Mg(2+) is required as a cofactor. Requires Zn(2+) as cofactor.

The catalysed reaction is RNA(n) + a ribonucleoside 5'-triphosphate = RNA(n+1) + diphosphate. In terms of biological role, DNA-dependent RNA polymerase catalyzes the transcription of DNA into RNA using the four ribonucleoside triphosphates as substrates. In Blochmanniella floridana, this protein is DNA-directed RNA polymerase subunit beta'.